A 179-amino-acid chain; its full sequence is Large ribosomal subunit protein uL5 (179 aa).

This sequence belongs to the universal ribosomal protein uL5 family. In terms of assembly, part of the 50S ribosomal subunit; part of the 5S rRNA/L5/L18/L25 subcomplex. Contacts the 5S rRNA and the P site tRNA. Forms a bridge to the 30S subunit in the 70S ribosome.

Functionally, this is one of the proteins that bind and probably mediate the attachment of the 5S RNA into the large ribosomal subunit, where it forms part of the central protuberance. In the 70S ribosome it contacts protein S13 of the 30S subunit (bridge B1b), connecting the 2 subunits; this bridge is implicated in subunit movement. Contacts the P site tRNA; the 5S rRNA and some of its associated proteins might help stabilize positioning of ribosome-bound tRNAs. The polypeptide is Large ribosomal subunit protein uL5 (Alcanivorax borkumensis (strain ATCC 700651 / DSM 11573 / NCIMB 13689 / SK2)).